We begin with the raw amino-acid sequence, 119 residues long: Large ribosomal subunit protein uL18 (119 aa).

It belongs to the universal ribosomal protein uL18 family. In terms of assembly, part of the 50S ribosomal subunit; part of the 5S rRNA/L5/L18/L25 subcomplex. Contacts the 5S and 23S rRNAs.

Functionally, this is one of the proteins that bind and probably mediate the attachment of the 5S RNA into the large ribosomal subunit, where it forms part of the central protuberance. This chain is Large ribosomal subunit protein uL18, found in Tropheryma whipplei (strain TW08/27) (Whipple's bacillus).